The sequence spans 323 residues: Cyclin-H (323 aa).

Residue Ser5 is modified to Phosphoserine; by CDK8. Residue Ser132 is modified to Phosphoserine. The interval 296–323 (GYEDDDYVSKKPKQEEEEWTDDDLVDAL) is disordered. Position 304 is a phosphoserine; by CDK8 (Ser304). The span at 310–323 (EEEEWTDDDLVDAL) shows a compositional bias: acidic residues. Thr315 bears the Phosphothreonine mark.

The protein belongs to the cyclin family. Cyclin C subfamily. Associates primarily with CDK7 and MAT1 to form the CAK complex. CAK can further associate with the core-TFIIH to form the TFIIH basal transcription factor.

The protein localises to the nucleus. Its function is as follows. Regulates CDK7, the catalytic subunit of the CDK-activating kinase (CAK) enzymatic complex. CAK activates the cyclin-associated kinases CDK1, CDK2, CDK4 and CDK6 by threonine phosphorylation. CAK complexed to the core-TFIIH basal transcription factor activates RNA polymerase II by serine phosphorylation of the repetitive C-terminal domain (CTD) of its large subunit (POLR2A), allowing its escape from the promoter and elongation of the transcripts. Involved in cell cycle control and in RNA transcription by RNA polymerase II. Its expression and activity are constant throughout the cell cycle. This chain is Cyclin-H (Ccnh), found in Rattus norvegicus (Rat).